A 166-amino-acid polypeptide reads, in one-letter code: UPF0561 protein C2orf68 homolog (166 aa).

Basic and acidic residues predominate over residues 32 to 49 (NQLDRDDYDKKVKQAAKE). Residues 32–107 (NQLDRDDYDK…SELEPPGRQL (76 aa)) are disordered. Over residues 91 to 101 (ESSSSGSSELE) the composition is skewed to low complexity.

The protein belongs to the UPF0561 family.

The sequence is that of UPF0561 protein C2orf68 homolog from Mus musculus (Mouse).